Reading from the N-terminus, the 211-residue chain is Uracil phosphoribosyltransferase (211 aa).

Residues R79, R104, and 131 to 139 (DPMLATGGS) each bind 5-phospho-alpha-D-ribose 1-diphosphate. Uracil is bound by residues I196 and 201–203 (GDA). D202 serves as a coordination point for 5-phospho-alpha-D-ribose 1-diphosphate.

Belongs to the UPRTase family. Mg(2+) serves as cofactor.

The enzyme catalyses UMP + diphosphate = 5-phospho-alpha-D-ribose 1-diphosphate + uracil. It functions in the pathway pyrimidine metabolism; UMP biosynthesis via salvage pathway; UMP from uracil: step 1/1. Its activity is regulated as follows. Allosterically activated by GTP. In terms of biological role, catalyzes the conversion of uracil and 5-phospho-alpha-D-ribose 1-diphosphate (PRPP) to UMP and diphosphate. This chain is Uracil phosphoribosyltransferase, found in Lactococcus lactis subsp. lactis (strain IL1403) (Streptococcus lactis).